Consider the following 248-residue polypeptide: MYQVIHTNKESKMVDNRMRFTIDRSMQFPLVEIDLEHGGSVYLQQGSMVYHTENVTLNTKLNGKGSGLGKLVGAIGRSMVSGESMFITQAMSDGDGKLALAPNTPGQIVALELGEKQYRLNDGAFLALDGSAQYKMERQNIGKALFGGQGGLFVMTTEGLGTLLANSFGSIKKITLDGGTMTIDNAHVVAWSRELDYDIHLENGFMQSIGTGEGVINTFRGHGEIYIQSLNLEQFAGTLKRYLPTSSN.

This is an uncharacterized protein from Streptococcus pyogenes serotype M6 (strain ATCC BAA-946 / MGAS10394).